The sequence spans 462 residues: Argininosuccinate lyase (462 aa).

The protein belongs to the lyase 1 family. Argininosuccinate lyase subfamily.

The protein resides in the cytoplasm. It catalyses the reaction 2-(N(omega)-L-arginino)succinate = fumarate + L-arginine. The protein operates within amino-acid biosynthesis; L-arginine biosynthesis; L-arginine from L-ornithine and carbamoyl phosphate: step 3/3. The protein is Argininosuccinate lyase of Pelagibacter ubique (strain HTCC1062).